The chain runs to 349 residues: S-adenosylmethionine:tRNA ribosyltransferase-isomerase (349 aa).

The protein belongs to the QueA family. As to quaternary structure, monomer.

The protein resides in the cytoplasm. The catalysed reaction is 7-aminomethyl-7-carbaguanosine(34) in tRNA + S-adenosyl-L-methionine = epoxyqueuosine(34) in tRNA + adenine + L-methionine + 2 H(+). Its pathway is tRNA modification; tRNA-queuosine biosynthesis. Functionally, transfers and isomerizes the ribose moiety from AdoMet to the 7-aminomethyl group of 7-deazaguanine (preQ1-tRNA) to give epoxyqueuosine (oQ-tRNA). The sequence is that of S-adenosylmethionine:tRNA ribosyltransferase-isomerase from Parabacteroides distasonis (strain ATCC 8503 / DSM 20701 / CIP 104284 / JCM 5825 / NCTC 11152).